The chain runs to 508 residues: Proline--tRNA ligase 2 (508 aa).

It belongs to the class-II aminoacyl-tRNA synthetase family. ProS type 3 subfamily. Homodimer.

It localises to the cytoplasm. It carries out the reaction tRNA(Pro) + L-proline + ATP = L-prolyl-tRNA(Pro) + AMP + diphosphate. Its function is as follows. Catalyzes the attachment of proline to tRNA(Pro) in a two-step reaction: proline is first activated by ATP to form Pro-AMP and then transferred to the acceptor end of tRNA(Pro). The sequence is that of Proline--tRNA ligase 2 from Bacillus anthracis.